A 177-amino-acid polypeptide reads, in one-letter code: Coatomer subunit zeta-1 (177 aa).

N-acetylmethionine is present on Met1.

The protein belongs to the adaptor complexes small subunit family. In terms of assembly, oligomeric complex that consists of at least the alpha, beta, beta', gamma, delta, epsilon and zeta subunits.

The protein resides in the cytoplasm. Its subcellular location is the golgi apparatus membrane. It is found in the cytoplasmic vesicle. The protein localises to the COPI-coated vesicle membrane. In terms of biological role, the coatomer is a cytosolic protein complex that binds to dilysine motifs and reversibly associates with Golgi non-clathrin-coated vesicles, which further mediate biosynthetic protein transport from the ER, via the Golgi up to the trans Golgi network. Coatomer complex is required for budding from Golgi membranes, and is essential for the retrograde Golgi-to-ER transport of dilysine-tagged proteins. The zeta subunit may be involved in regulating the coat assembly and, hence, the rate of biosynthetic protein transport due to its association-dissociation properties with the coatomer complex. The protein is Coatomer subunit zeta-1 (COPZ1) of Homo sapiens (Human).